The primary structure comprises 299 residues: 33 kDa chaperonin (299 aa).

Disulfide bonds link cysteine 240/cysteine 242 and cysteine 273/cysteine 276.

It belongs to the HSP33 family. In terms of processing, under oxidizing conditions two disulfide bonds are formed involving the reactive cysteines. Under reducing conditions zinc is bound to the reactive cysteines and the protein is inactive.

Its subcellular location is the cytoplasm. Functionally, redox regulated molecular chaperone. Protects both thermally unfolding and oxidatively damaged proteins from irreversible aggregation. Plays an important role in the bacterial defense system toward oxidative stress. This chain is 33 kDa chaperonin, found in Thermosynechococcus vestitus (strain NIES-2133 / IAM M-273 / BP-1).